We begin with the raw amino-acid sequence, 479 residues long: UDP-glycosyltransferase 84A3 (479 aa).

Catalysis depends on H19, which acts as the Proton acceptor. H19 contacts an anthocyanidin. Q346, H361, W364, N365, S366, and E369 together coordinate UDP-alpha-D-glucose. G384 lines the an anthocyanidin pocket. D385 and Q386 together coordinate UDP-alpha-D-glucose.

This sequence belongs to the UDP-glycosyltransferase family.

The enzyme catalyses (E)-4-coumarate + UDP-alpha-D-glucose = 4-O-(beta-D-glucosyl)-trans-4-coumarate + UDP + H(+). It carries out the reaction (E)-ferulate + UDP-alpha-D-glucose = 1-O-[(E)-feruloyl]-beta-D-glucose + UDP. The catalysed reaction is (E)-caffeate + UDP-alpha-D-glucose = 1-O-[(E)-caffeoyl]-beta-D-glucose + UDP. It catalyses the reaction (E)-sinapate + UDP-alpha-D-glucose = 1-O-(trans-sinapoyl)-beta-D-glucose + UDP. The enzyme catalyses (E)-cinnamate + UDP-alpha-D-glucose = 1-O-(trans-cinnamoyl)-beta-D-glucose + UDP. Functionally, UDP-glucosyltransferase that forms glucose esters with phenylpropanoids. Glucosylates 4-coumarate, ferulate, caffeate, sinapate and cinnamate. This is UDP-glycosyltransferase 84A3 from Arabidopsis thaliana (Mouse-ear cress).